The sequence spans 255 residues: Short chain dehydrogenase adrF (255 aa).

The NADP(+) site is built by Ile-11, Arg-118, Tyr-150, Lys-154, and Val-183. The active-site Proton acceptor is the Tyr-150. The Lowers pKa of active site Tyr role is filled by Lys-154.

Belongs to the short-chain dehydrogenases/reductases (SDR) family.

It participates in secondary metabolite biosynthesis; terpenoid biosynthesis. Functionally, short chain dehydrogenase; part of the gene cluster that mediates the biosynthesis of andrastins, meroterpenoid compounds that exhibit inhibitory activity against ras farnesyltransferase, suggesting that they could be promising leads for antitumor agents. The first step of the pathway is the synthesis of 3,5-dimethylorsellinic acid (DMOA) by the polyketide synthase adrD via condensation of one acetyl-CoA starter unit with 3 malonyl-CoA units and 2 methylations. DMAO is then converted to farnesyl-DMAO by the prenyltransferase adrG. The methyltransferase adrK catalyzes the methylation of the carboxyl group of farnesyl-DMAO to farnesyl-DMAO methyl ester which is further converted to epoxyfarnesyl-DMAO methyl ester by the FAD-dependent monooxygenase adrH. The terpene cyclase adrI then catalyzes the carbon skeletal rearrangement to generate the andrastin E, the first compound in the pathway having the andrastin scaffold, with the tetracyclic ring system. The post-cyclization tailoring enzymes adrF, adrE, adrJ, and adrA, are involved in the conversion of andrastin E into andrastin A. The short chain dehydrogenase adrF is responsible for the oxidation of the C-3 a hydroxyl group of andrastin E to yield the corresponding ketone, andrastin D. The ketoreductase adrE stereoselectively reduces the carbonyl moiety to reverse the stereochemistry of the C-3 position to yield andrastin F. The acetyltransferase adrJ is the acetyltransferase that attaches the acetyl group to the C-3 hydroxyl group of andrastin F to yield andrastin C. Finally, the cytochrome P450 monooxygenase adrA catalyzes two sequential oxidation reactions of the C-23 methyl group, to generate the corresponding alcohol andrastin B, and aldehyde andrastin A. This is Short chain dehydrogenase adrF from Penicillium rubens (strain ATCC 28089 / DSM 1075 / NRRL 1951 / Wisconsin 54-1255) (Penicillium chrysogenum).